A 150-amino-acid polypeptide reads, in one-letter code: Deoxyuridine 5'-triphosphate nucleotidohydrolase (150 aa).

Substrate contacts are provided by residues arginine 67–serine 69, asparagine 80, and valine 84–aspartate 86.

The protein belongs to the dUTPase family. Mg(2+) is required as a cofactor.

The catalysed reaction is dUTP + H2O = dUMP + diphosphate + H(+). Its pathway is pyrimidine metabolism; dUMP biosynthesis; dUMP from dCTP (dUTP route): step 2/2. This enzyme is involved in nucleotide metabolism: it produces dUMP, the immediate precursor of thymidine nucleotides and it decreases the intracellular concentration of dUTP so that uracil cannot be incorporated into DNA. The protein is Deoxyuridine 5'-triphosphate nucleotidohydrolase (dut) of Lactococcus lactis subsp. lactis (strain IL1403) (Streptococcus lactis).